A 258-amino-acid polypeptide reads, in one-letter code: Small ribosomal subunit protein uS2 (258 aa).

The protein belongs to the universal ribosomal protein uS2 family.

This is Small ribosomal subunit protein uS2 from Streptococcus suis (strain 05ZYH33).